The chain runs to 407 residues: MKFVDEVSIRVKAGDGGNGCMSFRREKFIENGGPNGGDGGDGGSIFMVADVNLNTLVDYRYTRHFDAERGSNGGSADCTGRKGEELVLRVPVGTTIIDATTQEIIGDLTKDGQRLMVAQGGWHGLGNTRFKSSTNRAPRQTTPGKPGDQRDLKLELKVLADVGLLGLPNAGKSTFIRSVSAAKPKVADYPFTTLVPNLGVVSVDRWKSFVVADIPGLIEGASDGAGLGIRFLKHLARTRLLLHLVDMAPLDESSAPDAAEVIVNELEKFSPSLAERDRWLVLNKCDQILEEEQEARKQEIVDRLEWTGPVYVISAIAKEGTEQLTRDIMRYLEERSQRIAEEPGYAEELAELDQRIEDEARAQLQALDDQRALRRSGVKSVHDIGDDDWDEEDVDDEDGPEIIYVRD.

The Obg domain occupies 1-159 (MKFVDEVSIR…RDLKLELKVL (159 aa)). The interval 127–149 (NTRFKSSTNRAPRQTTPGKPGDQ) is disordered. A compositionally biased stretch (polar residues) spans 129-143 (RFKSSTNRAPRQTTP). Residues 160-333 (ADVGLLGLPN…LTRDIMRYLE (174 aa)) enclose the OBG-type G domain. Residues 166 to 173 (GLPNAGKS), 191 to 195 (FTTLV), 213 to 216 (DIPG), 283 to 286 (NKCD), and 314 to 316 (SAI) contribute to the GTP site. Mg(2+) contacts are provided by Ser173 and Thr193. The interval 376 to 407 (SGVKSVHDIGDDDWDEEDVDDEDGPEIIYVRD) is disordered. Acidic residues predominate over residues 385–400 (GDDDWDEEDVDDEDGP).

The protein belongs to the TRAFAC class OBG-HflX-like GTPase superfamily. OBG GTPase family. As to quaternary structure, monomer. The cofactor is Mg(2+).

It localises to the cytoplasm. In terms of biological role, an essential GTPase which binds GTP, GDP and possibly (p)ppGpp with moderate affinity, with high nucleotide exchange rates and a fairly low GTP hydrolysis rate. Plays a role in control of the cell cycle, stress response, ribosome biogenesis and in those bacteria that undergo differentiation, in morphogenesis control. This chain is GTPase Obg, found in Pseudomonas savastanoi pv. phaseolicola (strain 1448A / Race 6) (Pseudomonas syringae pv. phaseolicola (strain 1448A / Race 6)).